Consider the following 87-residue polypeptide: Cell division topological specificity factor (87 aa).

This sequence belongs to the MinE family.

Its function is as follows. Prevents the cell division inhibition by proteins MinC and MinD at internal division sites while permitting inhibition at polar sites. This ensures cell division at the proper site by restricting the formation of a division septum at the midpoint of the long axis of the cell. This is Cell division topological specificity factor from Chelativorans sp. (strain BNC1).